Here is a 2123-residue protein sequence, read N- to C-terminus: Toxin Afp18 (2123 aa).

The interval 864-919 is disordered; that stretch reads FFDNSDQDADQPRVRRKREMTDEIMLSDGSSRSEAKALPDENELDTDQSKSRPESA. Residues 1771–2123 form a tyrosine glycosyltransferase region; the sequence is VFDSANTNRS…GNSTQSSGLS (353 aa). UDP-N-acetyl-alpha-D-glucosamine is bound by residues 1850-1852 and 1940-1941; these read IWV and SD. A divalent metal cation is bound by residues Asp1957 and Asp1959. The DxDD motif motif lies at 1957-1960; sequence DIDD. Residue Asn1993 participates in UDP-N-acetyl-alpha-D-glucosamine binding.

A divalent metal cation serves as cofactor.

The protein resides in the secreted. It localises to the host cell membrane. It catalyses the reaction L-tyrosyl-[protein] + UDP-N-acetyl-alpha-D-glucosamine = O-(N-acetyl-alpha-D-glucosaminyl)-L-tyrosyl-[protein] + UDP + H(+). Toxin component of the prophage tail-derived protein translocation system Afp, which is the causative agent of enteric redmouth disease in salmonid fish species. Mono-O-GlcNAcylates the small GTPase RhoA in eukaryotic host cells at Tyr-34, using UDP-N-acetylglucosamine (UDP-GlcNAc) as the sugar donor. Glycosylation of RhoA results in impaired effector and regulator interaction and inactivation of downstream RhoA signaling which leads to actin filament depolymerization and blocks cytokinesis and gastrulation during zebrafish embryo development. To a lesser extent, is also able to glycosylate other Rho family GTPases (RhoB, RhoC, Rac1, Rac2, Rac3, and Cdc42) in vitro at a switch I tyrosine residue, but not Ras proteins. The polypeptide is Toxin Afp18 (Yersinia ruckeri serotype O1 (strain ATCC 29473 / DSM 18506 / JCM 15110 / CCUG 14190 / NCIMB 2194 / NCTC 12986 / 2396-61)).